A 101-amino-acid polypeptide reads, in one-letter code: Small ribosomal subunit protein uS14 (101 aa).

The protein belongs to the universal ribosomal protein uS14 family. Part of the 30S ribosomal subunit. Contacts proteins S3 and S10.

Binds 16S rRNA, required for the assembly of 30S particles and may also be responsible for determining the conformation of the 16S rRNA at the A site. The protein is Small ribosomal subunit protein uS14 of Alteromonas mediterranea (strain DSM 17117 / CIP 110805 / LMG 28347 / Deep ecotype).